The sequence spans 457 residues: Transcription termination factor Rho (457 aa).

The segment at 1–23 is disordered; it reads MNTTNKQLTEELNNTESNNDHND. Positions 77 to 152 constitute a Rho RNA-BD domain; sequence LIVGEGVLEV…LKVNRVNFED (76 aa). ATP contacts are provided by residues 200–205, 212–217, and R243; these read GKGQRA and RTGKTV.

It belongs to the Rho family. In terms of assembly, homohexamer. The homohexamer assembles into an open ring structure.

Facilitates transcription termination by a mechanism that involves Rho binding to the nascent RNA, activation of Rho's RNA-dependent ATPase activity, and release of the mRNA from the DNA template. The polypeptide is Transcription termination factor Rho (Rickettsia prowazekii (strain Madrid E)).